The sequence spans 759 residues: MPLPIPRLLIPALLLASGASLAENDLNWVDREQMATFPAVQQREIPDWCAGIYYNPHVGMPVEGSDTVITADHSTLTQDGLIKLDGDVLIEQPGRRITTDIAELDQATGKFELENGMRMESDQATFIAENMSGQTRRKEGSLQGVRYSLFDTSARGSANYIFLKQNTTTITHGTYTTCAPGSNGWVMQGDRIFLDRDKGWGEANNVVLKVKSVPIFWLPWMTFPIDDRRKSGLLFPTLSVGDSSGLDISQPIYLNLHPQLDATISPRYIDGRGSGLDSEMRYLSRWGEGSLSYGVLFNDRKFDNENRQVGRWTHNGDINRWSLETDFTYVSDDFYFKDLDTGLEISSQTHLPRLGEARYYGRTWQVLGRLQSWQTIDPTLDDADLPYRRLPQLQLTGDPTLVGPVKGLWLSDITAFGRSDSDDSGKATGLRGHMAPALTMRLQNSWGYVEPRARLYHTQYRLDSVDANEEDNPDLTTWGASLDSGLFFERAGNWFGSSFTQTLEPRLFLNKVAYEDQSELPNFDSGELTFSYNSLFRENRFIGYDRIGDEEKLAVGLTSRFLHDGTGREQLRLRVAQGFYFEDRKVVTERAVEDPTDDQTPVIGDARWNFAQDWYLYSEGQWDIEENKRERSNFQIGYNDRERRVVNVGYHDRPADSIRESEVSAILPVHRHWRLIGRWMYDLDNQRSLETMAGTEYRNCCWKLRLLSQRELMDDNGDGNLEADSTIWFQIQMIGLGGFGGQVDSLLERSIPGYRRQYD.

Residues 1-22 form the signal peptide; the sequence is MPLPIPRLLIPALLLASGASLA.

This sequence belongs to the LptD family. Component of the lipopolysaccharide transport and assembly complex. Interacts with LptE and LptA.

Its subcellular location is the cell outer membrane. In terms of biological role, together with LptE, is involved in the assembly of lipopolysaccharide (LPS) at the surface of the outer membrane. The protein is LPS-assembly protein LptD of Alcanivorax borkumensis (strain ATCC 700651 / DSM 11573 / NCIMB 13689 / SK2).